The sequence spans 362 residues: S-adenosylmethionine decarboxylase proenzyme (362 aa).

Catalysis depends on residues Glu-11 and Glu-14. Ser-71 serves as the catalytic Schiff-base intermediate with substrate; via pyruvic acid. Ser-71 carries the pyruvic acid (Ser); by autocatalysis modification. Residue Cys-85 is the Proton donor; for catalytic activity of the active site. Active-site proton acceptor; for processing activity residues include Ser-234 and His-247.

Belongs to the eukaryotic AdoMetDC family. It depends on pyruvate as a cofactor. In terms of processing, is synthesized initially as an inactive proenzyme. Formation of the active enzyme involves a self-maturation process in which the active site pyruvoyl group is generated from an internal serine residue via an autocatalytic post-translational modification. Two non-identical subunits are generated from the proenzyme in this reaction, and the pyruvate is formed at the N-terminus of the alpha chain, which is derived from the carboxyl end of the proenzyme. The post-translation cleavage follows an unusual pathway, termed non-hydrolytic serinolysis, in which the side chain hydroxyl group of the serine supplies its oxygen atom to form the C-terminus of the beta chain, while the remainder of the serine residue undergoes an oxidative deamination to produce ammonia and the pyruvoyl group blocking the N-terminus of the alpha chain.

The catalysed reaction is S-adenosyl-L-methionine + H(+) = S-adenosyl 3-(methylsulfanyl)propylamine + CO2. The protein operates within amine and polyamine biosynthesis; S-adenosylmethioninamine biosynthesis; S-adenosylmethioninamine from S-adenosyl-L-methionine: step 1/1. In Ipomoea batatas (Sweet potato), this protein is S-adenosylmethionine decarboxylase proenzyme (SAMDC).